The following is a 214-amino-acid chain: MINRTSIIKQPDKISFFYDVYKLQKEYQDSLISGKSNMNFIWLGEHQLCYTVGRGSNMDNLLFSADEQDVFKIDRGGEVTCHMPGQLVTYLVLDLSNLNKDLNWYLRKIEKIIIKTLRSFNINCSTKDGFTGVWIGERKIASIGIGCKRWVTIHGFSINVNCKLENFNKIVPCGIKGCQMVNMSDYNKNVDIKEVKKIVKKIIHEEFNFNFVSE.

Residues Lys-35 to Phe-211 form the BPL/LPL catalytic domain. Substrate contacts are provided by residues Arg-75–His-82, Ser-142–Gly-144, and Gly-155–Ser-157. Cys-173 (acyl-thioester intermediate) is an active-site residue.

It belongs to the LipB family.

It is found in the cytoplasm. It carries out the reaction octanoyl-[ACP] + L-lysyl-[protein] = N(6)-octanoyl-L-lysyl-[protein] + holo-[ACP] + H(+). It functions in the pathway protein modification; protein lipoylation via endogenous pathway; protein N(6)-(lipoyl)lysine from octanoyl-[acyl-carrier-protein]: step 1/2. Functionally, catalyzes the transfer of endogenously produced octanoic acid from octanoyl-acyl-carrier-protein onto the lipoyl domains of lipoate-dependent enzymes. Lipoyl-ACP can also act as a substrate although octanoyl-ACP is likely to be the physiological substrate. This is Octanoyltransferase from Prochlorococcus marinus subsp. pastoris (strain CCMP1986 / NIES-2087 / MED4).